Reading from the N-terminus, the 88-residue chain is Apolipoprotein C-I (88 aa).

An N-terminal signal peptide occupies residues 1–26; that stretch reads MRLFLSLPVLVVVLAMVLEGPAPAQA.

It belongs to the apolipoprotein C1 family.

The protein resides in the secreted. Inhibitor of lipoprotein binding to the low density lipoprotein (LDL) receptor, LDL receptor-related protein, and very low density lipoprotein (VLDL) receptor. Associates with high density lipoproteins (HDL) and the triacylglycerol-rich lipoproteins in the plasma and makes up about 10% of the protein of the VLDL and 2% of that of HDL. Appears to interfere directly with fatty acid uptake and is also the major plasma inhibitor of cholesteryl ester transfer protein (CETP). Binds free fatty acids and reduces their intracellular esterification. Modulates the interaction of APOE with beta-migrating VLDL and inhibits binding of beta-VLDL to the LDL receptor-related protein. The chain is Apolipoprotein C-I (APOC1) from Ailurus fulgens (Himalayan red panda).